The following is a 103-amino-acid chain: Co-chaperonin GroES (103 aa).

This sequence belongs to the GroES chaperonin family. As to quaternary structure, heptamer of 7 subunits arranged in a ring. Interacts with the chaperonin GroEL.

It localises to the cytoplasm. Functionally, together with the chaperonin GroEL, plays an essential role in assisting protein folding. The GroEL-GroES system forms a nano-cage that allows encapsulation of the non-native substrate proteins and provides a physical environment optimized to promote and accelerate protein folding. GroES binds to the apical surface of the GroEL ring, thereby capping the opening of the GroEL channel. The polypeptide is Co-chaperonin GroES (Crocosphaera subtropica (strain ATCC 51142 / BH68) (Cyanothece sp. (strain ATCC 51142))).